The chain runs to 288 residues: Thymidylate synthase (288 aa).

Arginine 21 is a dUMP binding site. Asparagine 51 provides a ligand contact to (6R)-5,10-methylene-5,6,7,8-tetrahydrofolate. 150–151 (RR) contributes to the dUMP binding site. Catalysis depends on cysteine 170, which acts as the Nucleophile. DUMP is bound by residues 190-193 (RSGD), asparagine 201, and 231-233 (HIY). Aspartate 193 contacts (6R)-5,10-methylene-5,6,7,8-tetrahydrofolate. Alanine 287 provides a ligand contact to (6R)-5,10-methylene-5,6,7,8-tetrahydrofolate.

Belongs to the thymidylate synthase family. Bacterial-type ThyA subfamily. In terms of assembly, homodimer.

The protein localises to the cytoplasm. It carries out the reaction dUMP + (6R)-5,10-methylene-5,6,7,8-tetrahydrofolate = 7,8-dihydrofolate + dTMP. Its pathway is pyrimidine metabolism; dTTP biosynthesis. Functionally, catalyzes the reductive methylation of 2'-deoxyuridine-5'-monophosphate (dUMP) to 2'-deoxythymidine-5'-monophosphate (dTMP) while utilizing 5,10-methylenetetrahydrofolate (mTHF) as the methyl donor and reductant in the reaction, yielding dihydrofolate (DHF) as a by-product. This enzymatic reaction provides an intracellular de novo source of dTMP, an essential precursor for DNA biosynthesis. The polypeptide is Thymidylate synthase (Aster yellows witches'-broom phytoplasma (strain AYWB)).